Reading from the N-terminus, the 882-residue chain is DNA mismatch repair protein MutS (882 aa).

656-663 contacts ATP; sequence GPNASGKS.

It belongs to the DNA mismatch repair MutS family.

Functionally, this protein is involved in the repair of mismatches in DNA. It is possible that it carries out the mismatch recognition step. This protein has a weak ATPase activity. The protein is DNA mismatch repair protein MutS of Synechococcus elongatus (strain ATCC 33912 / PCC 7942 / FACHB-805) (Anacystis nidulans R2).